The primary structure comprises 143 residues: MSPEQWGIYGWTFSHAVALGYPINPTEEDKLRYYTFFNSYRYVLPCGKCRINYADHLNKYPLTDEVLSSRENLVKWTIDIHNVVNYYTGKKMLTYPEAIEAIEKTLTPKKKSSYNWFFIILIIIGIIVIIYLMYIVFKKKLNK.

The ERV/ALR sulfhydryl oxidase domain occupies 10-104 (GWTFSHAVAL…YPEAIEAIEK (95 aa)). Cys46 and Cys49 are joined by a disulfide. Residues 117–137 (FFIILIIIGIIVIIYLMYIVF) traverse the membrane as a helical segment.

It depends on FAD as a cofactor.

It is found in the membrane. It carries out the reaction 2 R'C(R)SH + O2 = R'C(R)S-S(R)CR' + H2O2. In terms of biological role, FAD-dependent sulfhydryl oxidase that catalyzes disulfide bond formation. The protein is Probable FAD-linked sulfhydryl oxidase R368 of Acanthamoeba polyphaga mimivirus (APMV).